The following is a 999-amino-acid chain: Receptor-like protein kinase 5 (999 aa).

The first 14 residues, 1–14, serve as a signal peptide directing secretion; sequence MLYCLILLLCLSST. At 15-621 the chain is on the extracellular side; sequence YLPSLSLNQD…LCRKITRSKN (607 aa). LRR repeat units follow at residues 90 to 112, 115 to 137, 140 to 161, 164 to 186, and 188 to 208; these read SLHS…DFDT, NLIS…LPFN, NLKF…SFGE, KLES…LGNV, and TLKE…PSQL. 2 N-linked (GlcNAc...) asparagine glycosylation sites follow: N98 and N102. N150 and N185 each carry an N-linked (GlcNAc...) asparagine glycan. Residue N210 is glycosylated (N-linked (GlcNAc...) asparagine). LRR repeat units lie at residues 213 to 236 and 237 to 259; these read ELQV…SRLT and SLVN…ITQL. 2 N-linked (GlcNAc...) asparagine glycosylation sites follow: N269 and N282. 12 LRR repeats span residues 285–307, 308–330, 332–353, 356–378, 380–402, 404–427, 428–450, 452–474, 500–523, 524–546, 548–569, and 571–593; these read TLKR…LNLL, NLES…ITRS, TLSE…QLGA, PLQY…VCGE, KLEY…LGKC, SLTR…WGLP, RLSL…IIGA, NLSN…IGSL, QLSR…RGWK, NLNE…VGIL, VLNY…ELQN, and KLNV…YANK. N452 carries an N-linked (GlcNAc...) asparagine glycan. N-linked (GlcNAc...) asparagine glycosylation is present at N576. A helical transmembrane segment spans residues 622 to 641; the sequence is IGYVWILLTIFLLAGLVFVV. Residues 642 to 999 lie on the Cytoplasmic side of the membrane; the sequence is GIVMFIAKCR…PYYTEDLNSV (358 aa). In terms of domain architecture, Protein kinase spans 683 to 968; the sequence is LDEKNVIGFG…KVVIMLQEVS (286 aa). ATP is bound by residues 689 to 697 and K711; that span reads IGFGSSGKV. 2 positions are modified to phosphotyrosine: Y766 and Y806. D819 functions as the Proton acceptor in the catalytic mechanism. S856 is modified (phosphoserine). A phosphotyrosine mark is found at Y864 and Y871. T872 carries the post-translational modification Phosphothreonine. The tract at residues 972–999 is disordered; it reads PCSSPNTSKRSKTGGKLSPYYTEDLNSV.

The protein belongs to the protein kinase superfamily. Ser/Thr protein kinase family. As to quaternary structure, interacts with CST. Binds to IDA. Mg(2+) serves as cofactor. The cofactor is Mn(2+). In terms of processing, autophosphorylated on Ser, Thr and Tyr residues. As to expression, expressed in roots and rosettes. Expressed at the base of petioles and pedicels, and in the abscission zones of the floral organs.

It is found in the cell membrane. The catalysed reaction is L-seryl-[protein] + ATP = O-phospho-L-seryl-[protein] + ADP + H(+). It carries out the reaction L-threonyl-[protein] + ATP = O-phospho-L-threonyl-[protein] + ADP + H(+). The enzyme catalyses L-tyrosyl-[protein] + ATP = O-phospho-L-tyrosyl-[protein] + ADP + H(+). Functionally, receptor with a dual specificity kinase activity acting on both serine/threonine- and tyrosine-containing substrates that controls floral organ abscission. May interact with the 'INFLORESCENCE DEFICIENT IN ABSCISSION' (IDA) ligands family. The chain is Receptor-like protein kinase 5 (RLK5) from Arabidopsis thaliana (Mouse-ear cress).